A 73-amino-acid polypeptide reads, in one-letter code: Carboxysome shell vertex protein CsoS4B (73 aa).

Positions 1-68 constitute a BMV domain; it reads MVCTQRVAGL…TDLTIGGIID (68 aa).

This sequence belongs to the CcmL/EutN family. CsoS4 subfamily. Homopentamer.

The protein resides in the carboxysome. Its function is as follows. Probably forms vertices in the carboxysome, a polyhedral inclusion where RuBisCO (ribulose bisphosphate carboxylase, cbbL-cbbS) is sequestered. Has been modeled to induce curvature upon insertion into an otherwise flat hexagonal layer of major carboxysome subunits. Has not been identified in purified carboxysomes; it is expected to be present in very low amounts. This is Carboxysome shell vertex protein CsoS4B from Prochlorococcus marinus subsp. pastoris (strain CCMP1986 / NIES-2087 / MED4).